We begin with the raw amino-acid sequence, 576 residues long: M-phase inducer phosphatase 2 (576 aa).

The residue at position 42 (Ser42) is a Phosphoserine. The span at 90-105 shows a compositional bias: low complexity; the sequence is RRTSECSLSSESSESS. Residues 90–119 form a disordered region; the sequence is RRTSECSLSSESSESSDAGLCMDSPSPVDP. Ser167 is modified (phosphoserine; by MELK). Phosphoserine is present on Ser248. A Phosphoserine; by MELK and MAPK14 modification is found at Ser321. The disordered stretch occupies residues 338–358; that stretch reads QDRDVPVQSKRRKSVTPLEEQ. Residue Ser351 is modified to Phosphoserine; by AURKA. Residue Ser372 is modified to Phosphoserine; by BRSK1 and MAPK14. The Rhodanese domain occupies 427 to 534; sequence IVEKFVIVDC…FFPQHPNFCE (108 aa). Residue Cys483 is part of the active site. Phosphoserine is present on Ser559.

The protein belongs to the MPI phosphatase family. As to quaternary structure, interacts with MAPK14 and 14-3-3 proteins. Phosphorylated by BRSK1 in vitro. Phosphorylated by CHEK1, which inhibits the activity of this protein. Phosphorylation at Ser-351 by AURKA might locally participate in the control of the onset of mitosis. Phosphorylation by MELK at Ser-167 promotes localization to the centrosome and the spindle poles during mitosis. Phosphorylation at Ser-321 and Ser-372 by MAPK14 is required for binding to 14-3-3 proteins. As to expression, expressed predominantly in spleen, lung, heart, brain, intestine, and muscle.

Its subcellular location is the cytoplasm. The protein localises to the cytoskeleton. It is found in the microtubule organizing center. The protein resides in the centrosome. It localises to the spindle pole. The enzyme catalyses O-phospho-L-tyrosyl-[protein] + H2O = L-tyrosyl-[protein] + phosphate. Stimulated by B-type cyclins. In terms of biological role, tyrosine protein phosphatase which functions as a dosage-dependent inducer of mitotic progression. Directly dephosphorylates CDK1 and stimulates its kinase activity. Required for G2/M phases of the cell cycle progression and abscission during cytokinesis in a ECT2-dependent manner. The three isoforms seem to have a different level of activity. The polypeptide is M-phase inducer phosphatase 2 (Cdc25b) (Mus musculus (Mouse)).